The chain runs to 142 residues: Large ribosomal subunit protein uL13 (142 aa).

Belongs to the universal ribosomal protein uL13 family. Part of the 50S ribosomal subunit.

This protein is one of the early assembly proteins of the 50S ribosomal subunit, although it is not seen to bind rRNA by itself. It is important during the early stages of 50S assembly. The polypeptide is Large ribosomal subunit protein uL13 (Thermococcus kodakarensis (strain ATCC BAA-918 / JCM 12380 / KOD1) (Pyrococcus kodakaraensis (strain KOD1))).